The primary structure comprises 198 residues: UPF0312 protein PFL_5802 (198 aa).

The N-terminal stretch at 1 to 23 (MLKKTLAALAIGSAVLAAGQVMA) is a signal peptide.

Belongs to the UPF0312 family. Type 1 subfamily.

The protein resides in the periplasm. The chain is UPF0312 protein PFL_5802 from Pseudomonas fluorescens (strain ATCC BAA-477 / NRRL B-23932 / Pf-5).